Consider the following 307-residue polypeptide: Ribonuclease H2 subunit B (307 aa).

Alanine 2 carries the post-translational modification N-acetylalanine. N6-acetyllysine is present on lysine 291. Residue serine 292 is modified to Phosphoserine.

This sequence belongs to the RNase H2 subunit B family. The RNase H2 complex is a heterotrimer composed of the catalytic subunit RNASEH2A and the non-catalytic subunits RNASEH2B and RNASEH2C.

The protein localises to the nucleus. Functionally, non catalytic subunit of RNase H2, an endonuclease that specifically degrades the RNA of RNA:DNA hybrids. Participates in DNA replication, possibly by mediating the removal of lagging-strand Okazaki fragment RNA primers during DNA replication. Mediates the excision of single ribonucleotides from DNA:RNA duplexes. The chain is Ribonuclease H2 subunit B (Rnaseh2b) from Rattus norvegicus (Rat).